We begin with the raw amino-acid sequence, 137 residues long: Hemoglobin subunit alpha-2 (137 aa).

Residues aspartate 1 to arginine 137 form the Globin domain. Residue histidine 54 coordinates O2. A heme b-binding site is contributed by histidine 83.

This sequence belongs to the globin family. The N-terminus of the mature protein is acetylated. As to expression, red blood cells.

The protein is Hemoglobin subunit alpha-2 of Telmatobius peruvianus (Andean frog).